Consider the following 549-residue polypeptide: Glucose-6-phosphate isomerase (549 aa).

The active-site Proton donor is glutamate 353. Catalysis depends on residues histidine 384 and lysine 512.

This sequence belongs to the GPI family.

It is found in the cytoplasm. The enzyme catalyses alpha-D-glucose 6-phosphate = beta-D-fructose 6-phosphate. The protein operates within carbohydrate biosynthesis; gluconeogenesis. It functions in the pathway carbohydrate degradation; glycolysis; D-glyceraldehyde 3-phosphate and glycerone phosphate from D-glucose: step 2/4. Its function is as follows. Catalyzes the reversible isomerization of glucose-6-phosphate to fructose-6-phosphate. The chain is Glucose-6-phosphate isomerase from Solidesulfovibrio magneticus (strain ATCC 700980 / DSM 13731 / RS-1) (Desulfovibrio magneticus).